A 209-amino-acid polypeptide reads, in one-letter code: MICOS complex subunit mic19 (209 aa).

Coiled-coil stretches lie at residues 48–86 (LELE…DTGS) and 127–156 (EVAA…GRKK).

This sequence belongs to the MICOS complex subunit Mic19 family. In terms of assembly, component of the mitochondrial contact site and cristae organizing system (MICOS) complex.

It localises to the mitochondrion inner membrane. Component of the MICOS complex, a large protein complex of the mitochondrial inner membrane that plays crucial roles in the maintenance of crista junctions, inner membrane architecture, and formation of contact sites to the outer membrane. Involved in osmoadaptation. The polypeptide is MICOS complex subunit mic19 (Emericella nidulans (strain FGSC A4 / ATCC 38163 / CBS 112.46 / NRRL 194 / M139) (Aspergillus nidulans)).